Consider the following 90-residue polypeptide: Probable Fe(2+)-trafficking protein (90 aa).

Belongs to the Fe(2+)-trafficking protein family. In terms of assembly, monomer.

Could be a mediator in iron transactions between iron acquisition and iron-requiring processes, such as synthesis and/or repair of Fe-S clusters in biosynthetic enzymes. The chain is Probable Fe(2+)-trafficking protein from Edwardsiella ictaluri (strain 93-146).